A 686-amino-acid polypeptide reads, in one-letter code: XK-related protein 5 (686 aa).

Transmembrane regions (helical) follow at residues 33 to 53, 205 to 225, 239 to 259, 265 to 285, and 297 to 317; these read LLWG…QALS, HFWV…WLVA, LFNL…WDSP, VTFY…ATDF, and IAGV…YYSL. Disordered stretches follow at residues 339–387, 448–468, and 490–592; these read GDKT…PPEA, ALSA…LENS, and FASD…APFP. A compositionally biased stretch (basic and acidic residues) spans 340 to 359; sequence DKTERRDSPRATDLAGKRTE. 2 stretches are compositionally biased toward polar residues: residues 450 to 468 and 490 to 509; these read SAQQ…LENS and FASD…TQGE. The segment covering 523 to 536 has biased composition (gly residues); sequence QGKGTGGQQRGGEG. Residues 550–567 are compositionally biased toward polar residues; that stretch reads VATSSQQEGSPATLQTAH.

This sequence belongs to the XK family.

The protein resides in the cell membrane. This is XK-related protein 5 from Homo sapiens (Human).